The chain runs to 556 residues: Endoplasmic reticulum membrane protein 65 (556 aa).

At 1–87 (MQHKDTAVAK…IRIPMFLEKF (87 aa)) the chain is on the cytoplasmic side. Position 22 is a phosphoserine (Ser22). A helical transmembrane segment spans residues 88-108 (MLFALLTSLDCFLYYFTVLPI). Residues 109–151 (RLIKGYVKQFKSYRQHYRLQQRSGHKNKIPFRYRITSREYKER) lie on the Lumenal side of the membrane. The helical transmembrane segment at 152–172 (CMIFIIVISSILLSKLDTSKL) threads the bilayer. The Cytoplasmic portion of the chain corresponds to 173–224 (YHRIKRQSTMKLYMLFSVLEMADKMLASLGQSLLTVMLSRKNSERILLHKCL). The chain crosses the membrane as a helical span at residues 225–245 (LVSMSLTYVTIHGYVLVYQAI). The Lumenal portion of the chain corresponds to 246-330 (SLNIAVNSYS…INFWSPRSTL (85 aa)). The N-linked (GlcNAc...) asparagine glycan is linked to Asn318. Residues 331–351 (SIVINILCGPMVSVVGSEVLV) traverse the membrane as a helical segment. Topologically, residues 352–391 (DWAKHAYITKFNRIRPQIYDKFYYIIYKDYSTRTHKLEDR) are cytoplasmic. Residues 392 to 412 (LGLPLPAFVVLFIVMVRPTLF) traverse the membrane as a helical segment. The Lumenal segment spans residues 413–428 (KSSEPSYLPSLFRILF). The helical transmembrane segment at 429 to 449 (MGASVFLLALLAKFTLDLILI) threads the bilayer. Topologically, residues 450–556 (KWSKRIEQRF…RYKMVSKRIW (107 aa)) are cytoplasmic.

Belongs to the TAPT1 family. As to quaternary structure, interacts with SLP1.

The protein resides in the endoplasmic reticulum membrane. The protein localises to the mitochondrion. In terms of biological role, may be involved in membrane protein folding. The polypeptide is Endoplasmic reticulum membrane protein 65 (Saccharomyces cerevisiae (strain ATCC 204508 / S288c) (Baker's yeast)).